Here is a 256-residue protein sequence, read N- to C-terminus: Type III pantothenate kinase (256 aa).

6–13 (DIGNTHIV) is an ATP binding site. 109-112 (GADR) provides a ligand contact to substrate. Asp111 (proton acceptor) is an active-site residue. K(+) is bound at residue Asp132. An ATP-binding site is contributed by Thr135. Thr186 contributes to the substrate binding site.

This sequence belongs to the type III pantothenate kinase family. As to quaternary structure, homodimer. The cofactor is NH4(+). K(+) serves as cofactor.

Its subcellular location is the cytoplasm. It catalyses the reaction (R)-pantothenate + ATP = (R)-4'-phosphopantothenate + ADP + H(+). The protein operates within cofactor biosynthesis; coenzyme A biosynthesis; CoA from (R)-pantothenate: step 1/5. In terms of biological role, catalyzes the phosphorylation of pantothenate (Pan), the first step in CoA biosynthesis. The chain is Type III pantothenate kinase from Fusobacterium nucleatum subsp. nucleatum (strain ATCC 25586 / DSM 15643 / BCRC 10681 / CIP 101130 / JCM 8532 / KCTC 2640 / LMG 13131 / VPI 4355).